The sequence spans 236 residues: Peptidyl-prolyl cis-trans isomerase CYP21-4 (236 aa).

Residues 22–42 (ISISTIIVCNLVVAVVILSLV) traverse the membrane as a helical; Signal-anchor for type II membrane protein segment. The segment at 52-71 (SRNTIEHETRSQRFEDTNTA) is disordered. The span at 54 to 67 (NTIEHETRSQRFED) shows a compositional bias: basic and acidic residues. The PPIase cyclophilin-type domain maps to 82-232 (FADINTSKGL…SPIGITGVVL (151 aa)). N-linked (GlcNAc...) asparagine glycosylation is present at Asn86.

The protein belongs to the cyclophilin-type PPIase family. Ubiquitous.

It is found in the membrane. It catalyses the reaction [protein]-peptidylproline (omega=180) = [protein]-peptidylproline (omega=0). PPIases accelerate the folding of proteins. It catalyzes the cis-trans isomerization of proline imidic peptide bonds in oligopeptides. The sequence is that of Peptidyl-prolyl cis-trans isomerase CYP21-4 (CYP21-4) from Arabidopsis thaliana (Mouse-ear cress).